The sequence spans 506 residues: Aldehyde dehydrogenase [NAD(P)+] 2 (506 aa).

Residue Glu268 is the Proton acceptor of the active site. Residue Cys302 is the Nucleophile of the active site.

It belongs to the aldehyde dehydrogenase family.

The protein localises to the cytoplasm. It catalyses the reaction an aldehyde + NAD(+) + H2O = a carboxylate + NADH + 2 H(+). It carries out the reaction 3-aminopropanal + NAD(+) + H2O = beta-alanine + NADH + 2 H(+). Its function is as follows. Cytoplasmic aldehyde dehydrogenase involved in ethanol oxidation. Involved in pantothenic acid production through the conversion of 3-aminopropanal to beta-alanine, an intermediate in pantothenic acid (vitamin B5) and coenzyme A (CoA) biosynthesis. In Saccharomyces cerevisiae (strain ATCC 204508 / S288c) (Baker's yeast), this protein is Aldehyde dehydrogenase [NAD(P)+] 2 (ALD3).